Here is a 390-residue protein sequence, read N- to C-terminus: Aspartate carbamoyltransferase, chloroplastic (390 aa).

A chloroplast-targeting transit peptide spans 1-68 (MSIASSLTSA…NLTRNVGPVR (68 aa)). 2 residues coordinate carbamoyl phosphate: Arg-136 and Thr-137. UMP is bound by residues Arg-136 and Thr-137. Lys-166 contacts L-aspartate. Residues Arg-187, His-215, and Gln-218 each contribute to the carbamoyl phosphate site. The UMP site is built by Arg-187 and His-215. 2 residues coordinate UMP: Arg-248 and Arg-310. The L-aspartate site is built by Arg-248 and Arg-310. Carbamoyl phosphate is bound by residues Leu-350 and Pro-351.

It belongs to the aspartate/ornithine carbamoyltransferase superfamily. ATCase family. As to quaternary structure, homotrimer.

It localises to the plastid. Its subcellular location is the chloroplast. The enzyme catalyses carbamoyl phosphate + L-aspartate = N-carbamoyl-L-aspartate + phosphate + H(+). Its pathway is pyrimidine metabolism; UMP biosynthesis via de novo pathway; (S)-dihydroorotate from bicarbonate: step 2/3. With respect to regulation, feedback inhibited by UMP. Its function is as follows. Catalyzes the condensation of carbamoyl phosphate and aspartate to form carbamoyl aspartate and inorganic phosphate, the committed step in the de novo pyrimidine nucleotide biosynthesis pathway. This chain is Aspartate carbamoyltransferase, chloroplastic (PYRB), found in Arabidopsis thaliana (Mouse-ear cress).